Consider the following 431-residue polypeptide: Phosphoribosylamine--glycine ligase (431 aa).

The 208-residue stretch at 109-316 (KDFLARHGIP…LVDLVEAAID (208 aa)) folds into the ATP-grasp domain. Position 135–196 (135–196 (VREKGAPIVV…EEFLDGEEAS (62 aa))) interacts with ATP. Residues E286 and N288 each coordinate Mg(2+).

Belongs to the GARS family. The cofactor is Mg(2+). It depends on Mn(2+) as a cofactor.

It carries out the reaction 5-phospho-beta-D-ribosylamine + glycine + ATP = N(1)-(5-phospho-beta-D-ribosyl)glycinamide + ADP + phosphate + H(+). It functions in the pathway purine metabolism; IMP biosynthesis via de novo pathway; N(1)-(5-phospho-D-ribosyl)glycinamide from 5-phospho-alpha-D-ribose 1-diphosphate: step 2/2. This is Phosphoribosylamine--glycine ligase from Xanthomonas campestris pv. campestris (strain ATCC 33913 / DSM 3586 / NCPPB 528 / LMG 568 / P 25).